Here is a 400-residue protein sequence, read N- to C-terminus: Nicotinate phosphoribosyltransferase (400 aa).

Histidine 220 is subject to Phosphohistidine; by autocatalysis.

It belongs to the NAPRTase family. Transiently phosphorylated on a His residue during the reaction cycle. Phosphorylation strongly increases the affinity for substrates and increases the rate of nicotinate D-ribonucleotide production. Dephosphorylation regenerates the low-affinity form of the enzyme, leading to product release.

It catalyses the reaction nicotinate + 5-phospho-alpha-D-ribose 1-diphosphate + ATP + H2O = nicotinate beta-D-ribonucleotide + ADP + phosphate + diphosphate. It functions in the pathway cofactor biosynthesis; NAD(+) biosynthesis; nicotinate D-ribonucleotide from nicotinate: step 1/1. Its function is as follows. Catalyzes the synthesis of beta-nicotinate D-ribonucleotide from nicotinate and 5-phospho-D-ribose 1-phosphate at the expense of ATP. The chain is Nicotinate phosphoribosyltransferase from Escherichia coli O17:K52:H18 (strain UMN026 / ExPEC).